The chain runs to 341 residues: Uroporphyrinogen decarboxylase (341 aa).

Residues 23–27, phenylalanine 42, aspartate 73, tyrosine 148, serine 203, and histidine 318 contribute to the substrate site; that span reads RQAGR.

The protein belongs to the uroporphyrinogen decarboxylase family. In terms of assembly, homodimer.

The protein localises to the cytoplasm. It catalyses the reaction uroporphyrinogen III + 4 H(+) = coproporphyrinogen III + 4 CO2. It functions in the pathway porphyrin-containing compound metabolism; protoporphyrin-IX biosynthesis; coproporphyrinogen-III from 5-aminolevulinate: step 4/4. Its function is as follows. Catalyzes the decarboxylation of four acetate groups of uroporphyrinogen-III to yield coproporphyrinogen-III. The sequence is that of Uroporphyrinogen decarboxylase from Brucella melitensis biotype 1 (strain ATCC 23456 / CCUG 17765 / NCTC 10094 / 16M).